Reading from the N-terminus, the 396-residue chain is NADH-quinone oxidoreductase subunit D (396 aa).

The protein belongs to the complex I 49 kDa subunit family. In terms of assembly, NDH-1 is composed of 14 different subunits. Subunits NuoB, C, D, E, F, and G constitute the peripheral sector of the complex.

It localises to the cell inner membrane. The catalysed reaction is a quinone + NADH + 5 H(+)(in) = a quinol + NAD(+) + 4 H(+)(out). In terms of biological role, NDH-1 shuttles electrons from NADH, via FMN and iron-sulfur (Fe-S) centers, to quinones in the respiratory chain. The immediate electron acceptor for the enzyme in this species is believed to be ubiquinone. Couples the redox reaction to proton translocation (for every two electrons transferred, four hydrogen ions are translocated across the cytoplasmic membrane), and thus conserves the redox energy in a proton gradient. In Mesorhizobium japonicum (strain LMG 29417 / CECT 9101 / MAFF 303099) (Mesorhizobium loti (strain MAFF 303099)), this protein is NADH-quinone oxidoreductase subunit D.